Consider the following 157-residue polypeptide: N-acetylgalactosamine-specific phosphotransferase enzyme IIB component 2 (157 aa).

The PTS EIIB type-4 domain occupies 1 to 157 (MPNIVLSRID…EPAVDLFKLL (157 aa)). H15 acts as the Pros-phosphohistidine intermediate in catalysis.

It localises to the cytoplasm. Functionally, the phosphoenolpyruvate-dependent sugar phosphotransferase system (sugar PTS), a major carbohydrate active -transport system, catalyzes the phosphorylation of incoming sugar substrates concomitantly with their translocation across the cell membrane. This system is involved in N-acetylgalactosamine transport. The sequence is that of N-acetylgalactosamine-specific phosphotransferase enzyme IIB component 2 (agaV) from Escherichia coli (strain K12).